The following is a 236-amino-acid chain: MTRRYWHINLEEMMEAGVHFGHGTRKWNPRMAPYISAKRKGIHITNLTRTARFLSEACDLVFDAASIGKHFLIVGTKKKAADSVASAAIRARCHYVNKKWLGGMSTNWSTTETRLHKFRDLRAEQKAGKLNRLPKRDAAMLKRQLSHLQTYLGGIKYMTGLPDIVIIIDQQEEYTALRECLTLGIPTICLIDTNCDPDLADISIPANDDAIASIRLILNKLVSAICEGRSSYIRNC.

It belongs to the universal ribosomal protein uS2 family.

It is found in the plastid. The protein localises to the chloroplast. This is Small ribosomal subunit protein uS2c (rps2) from Calycanthus floridus var. glaucus (Eastern sweetshrub).